Here is a 152-residue protein sequence, read N- to C-terminus: Ubiquitin-conjugating enzyme E2 2 (152 aa).

Residues 4–150 (PARKRLMRDF…VREVVEQSWT (147 aa)) enclose the UBC core domain. Cys-88 serves as the catalytic Glycyl thioester intermediate.

The protein belongs to the ubiquitin-conjugating enzyme family.

It carries out the reaction S-ubiquitinyl-[E1 ubiquitin-activating enzyme]-L-cysteine + [E2 ubiquitin-conjugating enzyme]-L-cysteine = [E1 ubiquitin-activating enzyme]-L-cysteine + S-ubiquitinyl-[E2 ubiquitin-conjugating enzyme]-L-cysteine.. It participates in protein modification; protein ubiquitination. Its function is as follows. Catalyzes the covalent attachment of ubiquitin to other proteins. This chain is Ubiquitin-conjugating enzyme E2 2 (UBC2), found in Triticum aestivum (Wheat).